Reading from the N-terminus, the 411-residue chain is G1/S-specific cyclin pas1 (411 aa).

2 disordered regions span residues 210 to 253 (LKNQ…PSVL) and 307 to 326 (SLSKPVSLPPTPSSPKVGVY). A compositionally biased stretch (low complexity) spans 218-252 (PSSSPQTTQDSSPILTMAPSTPVSVGSTPPSTPSV).

The protein belongs to the cyclin family.

Functionally, essential for the control of the cell cycle at the G1/S (start) transition. Interacts with the pef1 protein kinase. The pef1/pas1 complex activates the res2/cdc10 complex. This Schizosaccharomyces pombe (strain 972 / ATCC 24843) (Fission yeast) protein is G1/S-specific cyclin pas1 (pas1).